Reading from the N-terminus, the 229-residue chain is 3-dehydroquinate dehydratase (229 aa).

3-dehydroquinate is bound by residues 33–35 (EWR) and Arg65. His121 serves as the catalytic Proton donor/acceptor. Residue Lys146 is the Schiff-base intermediate with substrate of the active site. 3 residues coordinate 3-dehydroquinate: Arg188, Ser207, and Gln211.

This sequence belongs to the type-I 3-dehydroquinase family. As to quaternary structure, homodimer.

The enzyme catalyses 3-dehydroquinate = 3-dehydroshikimate + H2O. Its pathway is metabolic intermediate biosynthesis; chorismate biosynthesis; chorismate from D-erythrose 4-phosphate and phosphoenolpyruvate: step 3/7. Involved in the third step of the chorismate pathway, which leads to the biosynthesis of aromatic amino acids. Catalyzes the cis-dehydration of 3-dehydroquinate (DHQ) and introduces the first double bond of the aromatic ring to yield 3-dehydroshikimate. The protein is 3-dehydroquinate dehydratase of Lactococcus lactis subsp. cremoris (strain MG1363).